The primary structure comprises 310 residues: tRNA dimethylallyltransferase (310 aa).

14 to 21 (GPTASGKT) contacts ATP. Residue 16–21 (TASGKT) coordinates substrate. Interaction with substrate tRNA stretches follow at residues 39–42 (DSAL), 163–167 (QRLSR), and 244–249 (RCVGYR).

The protein belongs to the IPP transferase family. As to quaternary structure, monomer. The cofactor is Mg(2+).

The catalysed reaction is adenosine(37) in tRNA + dimethylallyl diphosphate = N(6)-dimethylallyladenosine(37) in tRNA + diphosphate. In terms of biological role, catalyzes the transfer of a dimethylallyl group onto the adenine at position 37 in tRNAs that read codons beginning with uridine, leading to the formation of N6-(dimethylallyl)adenosine (i(6)A). The protein is tRNA dimethylallyltransferase of Tolumonas auensis (strain DSM 9187 / NBRC 110442 / TA 4).